We begin with the raw amino-acid sequence, 358 residues long: NAC domain-containing protein 12 (358 aa).

An NAC domain is found at 16 to 177; that stretch reads VPPGFRFHPT…GWVVCRVFRK (162 aa). A DNA-binding region spans residues 116–183; the sequence is IGLRKTLVFY…VFRKKNYQKI (68 aa).

Stems and roots, specifically in interfascicular fibers (sclerenchyma), cells differentiating into vascular vessels (cambium), and xylem.

Its subcellular location is the nucleus. Functionally, transcriptional activator of genes involved in biosynthesis of secondary walls. Together with NST1, required for the secondary cell wall thickening and lignification of sclerenchymatous fibers and secondary xylem vessels (tracheary elements). Seems to repress the secondary cell wall thickening of xylary fibers. May also regulate the secondary cell wall lignification of other tissues. Binds to and activates the promoter of MYB46. The chain is NAC domain-containing protein 12 from Arabidopsis thaliana (Mouse-ear cress).